Consider the following 207-residue polypeptide: MKLRATFVFKTTLVALSFALFALFLVSCTENVKEIKSESVINELFPNLWVFLAHLLAFVILLFLLLFLFWKPTQKFLNQRKALLEEQVNQANSLEQQAQALLQQANQRHENSLVVAKEIVDQANYEALQLKSEIEKKANRQANLMIFQARQEIEKEKRLIQEQSLKESVELAMLAAKELIIKKVDVKADKAFIEEFIRELEAEDDHD.

An N-terminal signal peptide occupies residues 1–27 (MKLRATFVFKTTLVALSFALFALFLVS). A lipid anchor (N-palmitoyl cysteine) is attached at Cys28. Cys28 is lipidated: S-diacylglycerol cysteine. A helical transmembrane segment spans residues 49–69 (WVFLAHLLAFVILLFLLLFLF).

The protein belongs to the ATPase B chain family. F-type ATPases have 2 components, F(1) - the catalytic core - and F(0) - the membrane proton channel. F(1) has five subunits: alpha(3), beta(3), gamma(1), delta(1), epsilon(1). F(0) has three main subunits: a(1), b(2) and c(10-14). The alpha and beta chains form an alternating ring which encloses part of the gamma chain. F(1) is attached to F(0) by a central stalk formed by the gamma and epsilon chains, while a peripheral stalk is formed by the delta and b chains.

Its subcellular location is the cell membrane. Functionally, f(1)F(0) ATP synthase produces ATP from ADP in the presence of a proton or sodium gradient. F-type ATPases consist of two structural domains, F(1) containing the extramembraneous catalytic core and F(0) containing the membrane proton channel, linked together by a central stalk and a peripheral stalk. During catalysis, ATP synthesis in the catalytic domain of F(1) is coupled via a rotary mechanism of the central stalk subunits to proton translocation. In terms of biological role, component of the F(0) channel, it forms part of the peripheral stalk, linking F(1) to F(0). In Mycoplasma pneumoniae (strain ATCC 29342 / M129 / Subtype 1) (Mycoplasmoides pneumoniae), this protein is ATP synthase subunit b.